The following is a 36-amino-acid chain: MKILVNESWEQQRKKIQQLLSDEKTGKESMVSVKWT.

This is an uncharacterized protein from Halalkalibacterium halodurans (strain ATCC BAA-125 / DSM 18197 / FERM 7344 / JCM 9153 / C-125) (Bacillus halodurans).